Reading from the N-terminus, the 74-residue chain is Small ribosomal subunit protein bS18 (74 aa).

This sequence belongs to the bacterial ribosomal protein bS18 family. As to quaternary structure, part of the 30S ribosomal subunit. Forms a tight heterodimer with protein bS6.

Functionally, binds as a heterodimer with protein bS6 to the central domain of the 16S rRNA, where it helps stabilize the platform of the 30S subunit. In Sphingopyxis alaskensis (strain DSM 13593 / LMG 18877 / RB2256) (Sphingomonas alaskensis), this protein is Small ribosomal subunit protein bS18.